Consider the following 336-residue polypeptide: MNLAIIAGDGIGPEVIGEAVKVLDAVLPEVEKTTYDLGARRYHATGEILPDSVLEELKVHDAILLGAIGDPSVPSGVLERGLLLRIRFALDHHINLRPAKLYSGVTGPLAGNPEIDFVVVREGTEGPYTGTGGAIRVGTPHEVATEVSLNTAFGVRRVVEDAFRRAQQRRKHLTLVHKNNVLTFAGALWWRTVQEVGAEYPDVEIAYQHVDSAMIHIVTDPGRFDVIVTDNLFGDIVTDLAAAVCGGIGLAASGNIDATRTNPSMFEPVHGSAPDIAGQGIADPTAAIMSVALLLAHVGETDAAARVDKAVEAHLSSRGDQELGTAAVGDRIVGLL.

Substrate is bound by residues Arg87, Arg97, Arg121, and Asp211. Asp211, Asp235, and Asp239 together coordinate Mg(2+). 271 to 283 (GSAPDIAGQGIAD) is a binding site for NAD(+).

This sequence belongs to the isocitrate and isopropylmalate dehydrogenases family. LeuB type 2 subfamily. In terms of assembly, homodimer. Requires Mg(2+) as cofactor. Mn(2+) serves as cofactor.

It is found in the cytoplasm. The enzyme catalyses (2R,3S)-3-isopropylmalate + NAD(+) = 4-methyl-2-oxopentanoate + CO2 + NADH. It participates in amino-acid biosynthesis; L-leucine biosynthesis; L-leucine from 3-methyl-2-oxobutanoate: step 3/4. Functionally, catalyzes the oxidation of 3-carboxy-2-hydroxy-4-methylpentanoate (3-isopropylmalate) to 3-carboxy-4-methyl-2-oxopentanoate. The product decarboxylates to 4-methyl-2 oxopentanoate. The sequence is that of 3-isopropylmalate dehydrogenase from Mycobacterium sp. (strain JLS).